The chain runs to 163 residues: 2-C-methyl-D-erythritol 2,4-cyclodiphosphate synthase (163 aa).

D9 and H11 together coordinate a divalent metal cation. 4-CDP-2-C-methyl-D-erythritol 2-phosphate is bound by residues 9 to 11 and 36 to 37; these read DVH and HS. H44 serves as a coordination point for a divalent metal cation. 4-CDP-2-C-methyl-D-erythritol 2-phosphate-binding positions include 58–60, 63–67, 134–137, F141, and R144; these read DIG, FPDDD, and TTSE.

It belongs to the IspF family. Homotrimer. The cofactor is a divalent metal cation.

It catalyses the reaction 4-CDP-2-C-methyl-D-erythritol 2-phosphate = 2-C-methyl-D-erythritol 2,4-cyclic diphosphate + CMP. The protein operates within isoprenoid biosynthesis; isopentenyl diphosphate biosynthesis via DXP pathway; isopentenyl diphosphate from 1-deoxy-D-xylulose 5-phosphate: step 4/6. In terms of biological role, involved in the biosynthesis of isopentenyl diphosphate (IPP) and dimethylallyl diphosphate (DMAPP), two major building blocks of isoprenoid compounds. Catalyzes the conversion of 4-diphosphocytidyl-2-C-methyl-D-erythritol 2-phosphate (CDP-ME2P) to 2-C-methyl-D-erythritol 2,4-cyclodiphosphate (ME-CPP) with a corresponding release of cytidine 5-monophosphate (CMP). The protein is 2-C-methyl-D-erythritol 2,4-cyclodiphosphate synthase of Halorhodospira halophila (strain DSM 244 / SL1) (Ectothiorhodospira halophila (strain DSM 244 / SL1)).